We begin with the raw amino-acid sequence, 218 residues long: Insulin-induced gene 2 protein (218 aa).

At 1-21 the chain is on the cytoplasmic side; it reads MGETDNAPRGPPSFLPHKMNL. Residues 22–44 traverse the membrane as a helical segment; the sequence is LLRGLLLFLIGVFLALVLNLLQV. At 45–63 the chain is on the lumenal side; sequence QRNVTLFPPDVLSSLFSSA. A helical membrane pass occupies residues 64-81; that stretch reads WWVPLCCGTAAAAIGLLY. Over 82–96 the chain is Cytoplasmic; the sequence is PCIDRHLGEPHKFKR. The helical transmembrane segment at 97-119 threads the bilayer; sequence EWSSVMRCVAVFVGINHASAKVD. Residues 120-122 lie on the Lumenal side of the membrane; it reads FAN. The chain crosses the membrane as a helical span at residues 123–141; sequence NTQLSLTLAALSIGLWWTF. The Cytoplasmic portion of the chain corresponds to 142–146; the sequence is DRSRS. Residues 147–168 traverse the membrane as a helical segment; it reads GLGLGIGISFFATVVSQLLVYN. Over 169 to 182 the chain is Lumenal; it reads GVYEYTAPDFLYVR. Residues 183–200 traverse the membrane as a helical segment; sequence SWLPCIFFAGGITMGNIG. Topologically, residues 201–218 are cytoplasmic; that stretch reads RQLEMYERLALVEKSHRD. Positions 212-218 match the KxHxx motif; that stretch reads VEKSHRD.

Belongs to the INSIG family. Interacts with scap; interaction is direct and only takes place in the presence of sterols; it prevents interaction between scap and the coat protein complex II (COPII). Associates with the SCAP-SREBP complex; association is mediated via its interaction with scap and only takes place in the presence of sterols.

It is found in the endoplasmic reticulum membrane. Oxysterol-binding protein that mediates feedback control of cholesterol synthesis by controlling both endoplasmic reticulum to Golgi transport of scap and degradation of hmgcr. Acts as a negative regulator of cholesterol biosynthesis by mediating the retention of the SCAP-SREBP complex in the endoplasmic reticulum, thereby blocking the processing of sterol regulatory element-binding proteins (SREBPs). Binds oxysterol, including 22-hydroxycholesterol, 24-hydroxycholesterol, 25-hydroxycholesterol and 27-hydroxycholesterol, regulating interaction with scap and retention of the SCAP-SREBP complex in the endoplasmic reticulum. In presence of oxysterol, interacts with scap, retaining the SCAP-SREBP complex in the endoplasmic reticulum, thereby preventing scap from escorting SREBPs to the Golgi. Sterol deprivation reduce oxysterol-binding, disrupting the interaction between insig2 and scap, thereby promoting Golgi transport of the SCAP-SREBP complex, followed by processing and nuclear translocation of SREBPs. Also regulates cholesterol synthesis by regulating degradation of hmgcr. This chain is Insulin-induced gene 2 protein, found in Xenopus tropicalis (Western clawed frog).